The primary structure comprises 69 residues: Beta-defensin 114 (69 aa).

The N-terminal stretch at 1–26 is a signal peptide; sequence MRIFYYLHFLCYVTFILPATCTLVNA. Cystine bridges form between cysteine 29/cysteine 57, cysteine 36/cysteine 50, and cysteine 40/cysteine 58.

The protein belongs to the beta-defensin family. As to expression, expressed in epididymis, predominantly in the caput (at protein level).

The protein resides in the secreted. Its function is as follows. Has a salt-sensitive antimicrobial activity against Gram-negative bacteria, including E.coli, Gram-positive, including S.aureus, and fungi, including C.albicans. Binds to and neutralizes bacterial lipopolysaccharides (LPS), abolishing TNF production by macrophages challenged with LPS. Rescues the LPS-induced reduction of sperm motility in vitro and may protect from LPS-induced lethality. In Homo sapiens (Human), this protein is Beta-defensin 114 (DEFB114).